A 232-amino-acid polypeptide reads, in one-letter code: Small ribosomal subunit protein uS2 (232 aa).

Belongs to the universal ribosomal protein uS2 family.

The polypeptide is Small ribosomal subunit protein uS2 (Pelotomaculum thermopropionicum (strain DSM 13744 / JCM 10971 / SI)).